The chain runs to 443 residues: Putative rhamnogalacturonase D (443 aa).

Residues 1 to 16 (MLVTSLIALLPAIAAA) form the signal peptide. A disulfide bridge connects residues C37 and C63. N-linked (GlcNAc...) asparagine glycans are attached at residues N47, N103, N124, and N152. The active-site Proton donor is the D215. C217 and C234 form a disulfide bridge. N-linked (GlcNAc...) asparagine glycosylation is found at N235, N250, N263, N276, and N281. C338 and C344 form a disulfide bridge. N-linked (GlcNAc...) asparagine glycosylation is present at N346. Cysteines 366 and 375 form a disulfide. The N-linked (GlcNAc...) asparagine glycan is linked to N380.

This sequence belongs to the glycosyl hydrolase 28 family.

Its subcellular location is the secreted. Its function is as follows. Pectinolytic enzymes consist of four classes of enzymes: pectine lyase, polygalacturonase, pectin methylesterase and rhamnogalacturonase. Hydrolyzes alpha-D-galacturonopyranosyl-(1,2)-alpha-L-rhamnopyranosyl linkages in the backbone of the hairy regions of pectins. This is Putative rhamnogalacturonase D (rhgD) from Aspergillus niger (strain ATCC MYA-4892 / CBS 513.88 / FGSC A1513).